A 143-amino-acid polypeptide reads, in one-letter code: uncharacterized protein (143 aa).

One can recognise an HTH marR-type domain in the interval 5–137; the sequence is DARLASDLSL…LRSAADLMLA (133 aa). A DNA-binding region (H-T-H motif) is located at residues 51 to 74; that stretch reads PGALAIRERVRPPSMTRVIASLAD.

As to quaternary structure, homodimer.

This is an uncharacterized protein from Mycobacterium bovis (strain ATCC BAA-935 / AF2122/97).